Here is a 119-residue protein sequence, read N- to C-terminus: Large ribosomal subunit protein uL18 (119 aa).

The protein belongs to the universal ribosomal protein uL18 family. In terms of assembly, part of the 50S ribosomal subunit; part of the 5S rRNA/L5/L18/L25 subcomplex. Contacts the 5S and 23S rRNAs.

This is one of the proteins that bind and probably mediate the attachment of the 5S RNA into the large ribosomal subunit, where it forms part of the central protuberance. This is Large ribosomal subunit protein uL18 from Anaeromyxobacter dehalogenans (strain 2CP-1 / ATCC BAA-258).